We begin with the raw amino-acid sequence, 95 residues long: Small ribosomal subunit protein uS14 (95 aa).

This sequence belongs to the universal ribosomal protein uS14 family. In terms of assembly, part of the 30S ribosomal subunit. Contacts proteins S3 and S10.

Binds 16S rRNA, required for the assembly of 30S particles and may also be responsible for determining the conformation of the 16S rRNA at the A site. The protein is Small ribosomal subunit protein uS14 (rpsN) of Carsonella ruddii.